A 327-amino-acid chain; its full sequence is Complex I intermediate-associated protein 30, mitochondrial (327 aa).

The transit peptide at 1 to 24 (MALVHKLLRGTYFLRKFSKPTSAL) directs the protein to the mitochondrion. The segment at 42–63 (PVASPGKASSQRKTEGDLQGDH) is disordered. A compositionally biased stretch (basic and acidic residues) spans 53-63 (RKTEGDLQGDH). Ser-318 is modified (phosphoserine).

Belongs to the CIA30 family. In terms of assembly, part of the mitochondrial complex I assembly/MCIA complex that comprises at least the core subunits TMEM126B, NDUFAF1, ECSIT and ACAD9 and complement subunits such as COA1 and TMEM186. Interacts with ECSIT. Interacts with ACAD9. At early stages of complex I assembly, it is found in intermediate subcomplexes that contain different subunits including NDUFB6, NDUFA6, NDUFA9, NDUFS3, NDUFS7, ND1, ND2 and ND3. Interacts with TMEM70 and TMEM242. Ubiquitous.

Its subcellular location is the mitochondrion. It localises to the mitochondrion matrix. Its function is as follows. As part of the MCIA complex, involved in the assembly of the mitochondrial complex I. This Homo sapiens (Human) protein is Complex I intermediate-associated protein 30, mitochondrial.